The chain runs to 1398 residues: Disease resistance protein RPV1 (1398 aa).

The region spanning Thr-22 to Leu-185 is the TIR domain. NAD(+) is bound by residues Arg-31–Arg-36 and Gly-63. Glu-97 is a catalytic residue. One can recognise an NB-ARC domain in the interval Ser-201–Ile-440. 24 LRR repeats span residues Val-203–Val-225, Lys-423–Asp-447, Leu-478–Ile-504, Ile-535–Lys-560, Ser-610–Gly-632, Gly-633–Arg-657, Met-678–Met-702, Lys-703–Leu-726, Ser-728–Met-750, Lys-751–Leu-773, Ser-775–Met-797, Lys-798–Leu-820, Ser-822–Met-844, Lys-845–Leu-867, Ser-869–Met-891, Lys-892–Leu-914, Ser-916–Met-938, Lys-939–Leu-961, Ser-963–Met-985, Lys-986–Leu-1008, Ser-1010–Met-1032, Lys-1033–Leu-1055, Met-1079–Leu-1102, and Leu-1105–Ala-1128. The span at Gln-1315–Asn-1328 shows a compositional bias: polar residues. The tract at residues Gln-1315–Gln-1336 is disordered. The stretch at Leu-1346–Arg-1369 is one LRR 25 repeat. The Nuclear localization signal motif lies at Arg-1369 to Arg-1373.

The protein belongs to the disease resistance TIR-NB-LRR family. Homodimer; homodimerization is required for NAD(+) hydrolase (NADase) activity.

It localises to the nucleus. The protein resides in the cytoplasm. It catalyses the reaction NAD(+) + H2O = ADP-D-ribose + nicotinamide + H(+). In terms of biological role, disease resistance (R) protein that confers resistance to multiple powdery and downy mildew by promoting cell death. Acts as a NAD(+) hydrolase (NADase): in response to activation, catalyzes cleavage of NAD(+) into ADP-D-ribose (ADPR) and nicotinamide; NAD(+) cleavage triggering a defense system that promotes cell death. In Vitis rotundifolia (Muscadine grape), this protein is Disease resistance protein RPV1.